Reading from the N-terminus, the 640-residue chain is MKITFPDGAVKEFEPGVSTADIAASISPGLKKKALAGKLNGELLDLVTPIHEDGAIEIVTPDHEDALGILRHSTAHLMAQALKRLYPDVKFGVGPAIESGFYYDIDTEAVISDESLVEIEKEMQKIVRENVPIEREVVSREEAIKRFKAIGDQYKLELIEAIPKDETVTIYTQGEFFDLCRGVHVPSTGKIQVFKLLSVAGAYWRGDSNNKMLQRIYGTAFFDKNGLKEFIQMQKEAKERDHRKLGKELELFTNSIEVGQGLPLWLPKGATIRRVIERYIVDKEERLGYNHVYTPIMANVELYKTSGHWDHYHEDMFPTMKMDNEELVLRPMNCPHHMMIYKNDIHSYRELPIRIAELGMMHRYEMSGALSGLQRVRGMTLNDAHVFVRPDQIKDEFKRVVELILEVYKDFDIKDYSFRLSYRDPKNTEKYFDDDAMWEKAQAMLKSAMDEMGMDYFEAEGEAAFYGPKLDVQVKTAIGKEETLSTVQLDFLLPERFDLTYIGEDGEKHRPVVIHRGVVSTMERFVAYLIEEYKGAFPTWLAPVQMELIPVNADAHLDYSKGVQDKLQRAGLRSEVDDRNEKLGYKIREAQTKKIPYALVLGDQEMEAGSVNVRRYGSKDSETMDLDAFIAQVVAEVSKY.

A TGS domain is found at Met-1–Thr-60. Positions Asp-241–Pro-538 are catalytic. Zn(2+) contacts are provided by Cys-334, His-385, and His-515.

It belongs to the class-II aminoacyl-tRNA synthetase family. As to quaternary structure, homodimer. The cofactor is Zn(2+).

It is found in the cytoplasm. The enzyme catalyses tRNA(Thr) + L-threonine + ATP = L-threonyl-tRNA(Thr) + AMP + diphosphate + H(+). In terms of biological role, catalyzes the attachment of threonine to tRNA(Thr) in a two-step reaction: L-threonine is first activated by ATP to form Thr-AMP and then transferred to the acceptor end of tRNA(Thr). Also edits incorrectly charged L-seryl-tRNA(Thr). The protein is Threonine--tRNA ligase of Listeria welshimeri serovar 6b (strain ATCC 35897 / DSM 20650 / CCUG 15529 / CIP 8149 / NCTC 11857 / SLCC 5334 / V8).